The following is a 426-amino-acid chain: Spermidine/putrescine import ATP-binding protein PotA (426 aa).

Residues 6 to 238 enclose the ABC transporter domain; sequence IEFKNVSKTY…PINHFVADFI (233 aa). Residue 40-47 participates in ATP binding; it reads GASGSGKS.

The protein belongs to the ABC transporter superfamily. Spermidine/putrescine importer (TC 3.A.1.11.1) family. In terms of assembly, the complex is composed of two ATP-binding proteins (PotA), two transmembrane proteins (PotB and PotC) and a solute-binding protein (PotD).

It localises to the cell membrane. It catalyses the reaction ATP + H2O + polyamine-[polyamine-binding protein]Side 1 = ADP + phosphate + polyamineSide 2 + [polyamine-binding protein]Side 1.. Its function is as follows. Part of the ABC transporter complex PotABCD involved in spermidine/putrescine import. Responsible for energy coupling to the transport system. The polypeptide is Spermidine/putrescine import ATP-binding protein PotA (Lactococcus lactis subsp. cremoris (strain SK11)).